A 413-amino-acid chain; its full sequence is MQSWPDPEVPKLSGDSPALRLYDTADRAVRPVAPGPTATLYVCGITPYDATHLGHAATYVTFDQVNRVLRDQGHDVHYVQNITDVDDPLFERAERDGVDWRELGSEQIQLFRDDMTALRVLPPRDYIGAMESVDEVIEAVEKLLASGAAYVVDDPEYPDVYFRTDATEQFGYESGYDRATMARFFAERGGDPDRAGKRDPLDAVLWRAARDGEPSWEAPFGPGRPGWHIECSAIALNRLGIEFDIQGGGNDLIFPHHEFSAAHGEALTDSRRFARHYVHTGMVGLDGEKMSKSRGNLVFVSVLRRDGVDPAAIRLALLADHYRSDRMWTDDVLATAVDRLQRWRTAAAAPAGPDAAPTVARLRQHLADDLDTPKALDAVDAWCADVRTGIGSDPAAPAQIARAVDALLGVVIA.

Cys-43 contacts Zn(2+). L-cysteinyl-5'-AMP is bound by residues 43 to 46, Thr-58, and 81 to 83; these read CGIT and NIT. Residues 45–55 carry the 'HIGH' region motif; it reads ITPYDATHLGH. The 'ERGGDP' region signature appears at 187 to 192; it reads ERGGDP. Trp-227 is a binding site for L-cysteinyl-5'-AMP. Position 231 (Cys-231) interacts with Zn(2+). 249 to 251 is a binding site for L-cysteinyl-5'-AMP; that stretch reads GND. His-256 serves as a coordination point for Zn(2+). Position 283 (Val-283) interacts with L-cysteinyl-5'-AMP. Residues 289-293 carry the 'KMSKS' region motif; that stretch reads KMSKS.

Belongs to the class-I aminoacyl-tRNA synthetase family. MshC subfamily. As to quaternary structure, monomer. The cofactor is Zn(2+).

The enzyme catalyses 1D-myo-inositol 2-amino-2-deoxy-alpha-D-glucopyranoside + L-cysteine + ATP = 1D-myo-inositol 2-(L-cysteinylamino)-2-deoxy-alpha-D-glucopyranoside + AMP + diphosphate + H(+). Catalyzes the ATP-dependent condensation of GlcN-Ins and L-cysteine to form L-Cys-GlcN-Ins. The polypeptide is L-cysteine:1D-myo-inositol 2-amino-2-deoxy-alpha-D-glucopyranoside ligase (Gordonia bronchialis (strain ATCC 25592 / DSM 43247 / BCRC 13721 / JCM 3198 / KCTC 3076 / NBRC 16047 / NCTC 10667) (Rhodococcus bronchialis)).